Here is a 197-residue protein sequence, read N- to C-terminus: Autophagy-related protein 33 (197 aa).

Helical transmembrane passes span 10 to 30, 52 to 72, and 78 to 98; these read GIAV…SLIT, AATA…FGAP, and PYLL…GCAS. Phosphoserine occurs at positions 127 and 129. Residues 135–148 show a composition bias toward basic and acidic residues; the sequence is EDNHASENTPRDGK. The disordered stretch occupies residues 135–154; sequence EDNHASENTPRDGKPAATTV. The chain crosses the membrane as a helical span at residues 172-192; sequence LIAATAIAIVGFVQAVIGVYG.

It belongs to the ATG33 family.

It is found in the mitochondrion membrane. Its function is as follows. Involved in the selective degradation of mitochondria via autophagy during starvation and at post-log phase. The chain is Autophagy-related protein 33 (ATG33) from Saccharomyces cerevisiae (strain ATCC 204508 / S288c) (Baker's yeast).